We begin with the raw amino-acid sequence, 297 residues long: Phosphoribosylaminoimidazole-succinocarboxamide synthase (297 aa).

The protein belongs to the SAICAR synthetase family.

It carries out the reaction 5-amino-1-(5-phospho-D-ribosyl)imidazole-4-carboxylate + L-aspartate + ATP = (2S)-2-[5-amino-1-(5-phospho-beta-D-ribosyl)imidazole-4-carboxamido]succinate + ADP + phosphate + 2 H(+). Its pathway is purine metabolism; IMP biosynthesis via de novo pathway; 5-amino-1-(5-phospho-D-ribosyl)imidazole-4-carboxamide from 5-amino-1-(5-phospho-D-ribosyl)imidazole-4-carboxylate: step 1/2. This chain is Phosphoribosylaminoimidazole-succinocarboxamide synthase, found in Rhodococcus erythropolis (strain PR4 / NBRC 100887).